The sequence spans 761 residues: Mitochondrial intermediate peptidase (761 aa).

The transit peptide at 1–37 (MLIQKILLNKEISRLPRILSILNYTGLRWLSGSSGRN) directs the protein to the mitochondrion. Histidine 547 is a Zn(2+) binding site. Residue glutamate 548 is part of the active site. Zn(2+) contacts are provided by histidine 551 and histidine 554.

The protein belongs to the peptidase M3 family. Zn(2+) serves as cofactor.

It is found in the mitochondrion matrix. It catalyses the reaction Release of an N-terminal octapeptide as second stage of processing of some proteins imported into the mitochondrion.. Functionally, cleaves proteins, imported into the mitochondrion, to their mature size. While most mitochondrial precursor proteins are processed to the mature form in one step by mitochondrial processing peptidase (MPP), the sequential cleavage by MIP of an octapeptide after initial processing by MPP is a required step for a subgroup of nuclear-encoded precursor proteins destined for the matrix or the inner membrane. This is Mitochondrial intermediate peptidase (OCT1) from Candida glabrata (strain ATCC 2001 / BCRC 20586 / JCM 3761 / NBRC 0622 / NRRL Y-65 / CBS 138) (Yeast).